Here is a 228-residue protein sequence, read N- to C-terminus: Triosephosphate isomerase (228 aa).

9-11 (NFK) serves as a coordination point for substrate. His93 serves as the catalytic Electrophile. Catalysis depends on Glu141, which acts as the Proton acceptor. Substrate is bound by residues Ile146, Gly181, and 202-203 (AS).

This sequence belongs to the triosephosphate isomerase family. As to quaternary structure, homotetramer; dimer of dimers.

It is found in the cytoplasm. It catalyses the reaction D-glyceraldehyde 3-phosphate = dihydroxyacetone phosphate. It participates in carbohydrate biosynthesis; gluconeogenesis. It functions in the pathway carbohydrate degradation; glycolysis; D-glyceraldehyde 3-phosphate from glycerone phosphate: step 1/1. Its function is as follows. Involved in the gluconeogenesis. Catalyzes stereospecifically the conversion of dihydroxyacetone phosphate (DHAP) to D-glyceraldehyde-3-phosphate (G3P). The sequence is that of Triosephosphate isomerase from Pyrobaculum calidifontis (strain DSM 21063 / JCM 11548 / VA1).